We begin with the raw amino-acid sequence, 141 residues long: ATP synthase epsilon chain (141 aa).

It belongs to the ATPase epsilon chain family. F-type ATPases have 2 components, CF(1) - the catalytic core - and CF(0) - the membrane proton channel. CF(1) has five subunits: alpha(3), beta(3), gamma(1), delta(1), epsilon(1). CF(0) has three main subunits: a, b and c.

The protein resides in the cell inner membrane. Produces ATP from ADP in the presence of a proton gradient across the membrane. The sequence is that of ATP synthase epsilon chain from Chromohalobacter salexigens (strain ATCC BAA-138 / DSM 3043 / CIP 106854 / NCIMB 13768 / 1H11).